The following is a 466-amino-acid chain: Ribosomal protein uS12 methylthiotransferase RimO (466 aa).

Positions 18 to 133 (PRIGFVSLGC…VMDAVHQHVP (116 aa)) constitute an MTTase N-terminal domain. [4Fe-4S] cluster is bound by residues cysteine 27, cysteine 63, cysteine 92, cysteine 164, cysteine 168, and cysteine 171. The Radical SAM core domain maps to 150-391 (LTPKHYAYLK…MAVAEAVSTA (242 aa)). The TRAM domain occupies 394 to 466 (QRRVGSSMQV…QGHDLIGELI (73 aa)).

It belongs to the methylthiotransferase family. RimO subfamily. The cofactor is [4Fe-4S] cluster.

The protein localises to the cytoplasm. It catalyses the reaction L-aspartate(89)-[ribosomal protein uS12]-hydrogen + (sulfur carrier)-SH + AH2 + 2 S-adenosyl-L-methionine = 3-methylsulfanyl-L-aspartate(89)-[ribosomal protein uS12]-hydrogen + (sulfur carrier)-H + 5'-deoxyadenosine + L-methionine + A + S-adenosyl-L-homocysteine + 2 H(+). Functionally, catalyzes the methylthiolation of an aspartic acid residue of ribosomal protein uS12. The polypeptide is Ribosomal protein uS12 methylthiotransferase RimO (Leptothrix cholodnii (strain ATCC 51168 / LMG 8142 / SP-6) (Leptothrix discophora (strain SP-6))).